The chain runs to 1588 residues: Paternally-expressed gene 3 protein (1588 aa).

One can recognise an SCAN box domain in the interval 46-128 (HQRFRNLIYV…TLLENYKEMY (83 aa)). 3 disordered regions span residues 128-231 (YQPE…YQNV), 265-304 (GHSHMTQGHSSRSKRSAYPSTSRGLKTMPEAKKSTHRRGI), and 317-347 (KFIKDVSRSSKSGRARESSDRSQRFPRMSDD). Over residues 129–142 (QPEDDNNSDVTSDD) the composition is skewed to acidic residues. 4 stretches are compositionally biased toward basic and acidic residues: residues 143 to 152 (DMTRNRRESS), 160 to 181 (FSDRDWDRRGRSRDMEPRDRWS), 205 to 224 (FEMDREDDRDSRAYESRSQD), and 293 to 304 (PEAKKSTHRRGI). 3 consecutive C2H2-type zinc fingers follow at residues 452–474 (YVCDECGRSFSVISEFVEHQIMH), 505–527 (FECKDCGETFNKSAALAEHRKIH), and 563–585 (YECRVCKETFLHSSALIEHQKIH). The span at 588–607 (DDKDNEREHERERERERGET) shows a compositional bias: basic and acidic residues. Residues 588 to 608 (DDKDNEREHERERERERGETF) are disordered. A C2H2-type 4 zinc finger spans residues 627–649 (YECKVCGETFLHSSSLKEHQKIH). Disordered regions lie at residues 839-889 (VASK…SKNR) and 905-929 (QKSVPGEGSGEFKKDGEFSVPSSNV). The span at 868–881 (LNDKRQKIPARENP) shows a compositional bias: basic and acidic residues. Residues 969–991 (YECQECGECFAHSSDLTEHQKIH) form a C2H2-type 5 zinc finger. The tract at residues 1056–1104 (EKSHGEESQGENTDGEETHSEETHGQETIEDPVIQGSDMEDPQKDDPDD) is disordered. Residues 1071-1082 (EETHSEETHGQE) show a composition bias toward basic and acidic residues. C2H2-type zinc fingers lie at residues 1107–1129 (YECEDCGLGFVDLTDLTDHQKVH), 1163–1185 (YECPKCGESFIHSSFLFEHQRIH), 1225–1247 (IRCLLCGQGFIHSSALNEHMRLH), 1282–1304 (FECAVCGESFVNPAELADHVTVH), and 1332–1354 (YECKDCGKSFIHSTVLTKHKELH). The span at 1396-1415 (EPEVEAAEPEVEAAEPEVEA) shows a compositional bias: acidic residues. The interval 1396–1495 (EPEVEAAEPE…GIEDPEEGED (100 aa)) is disordered. 7 consecutive repeat copies span residues 1397-1403 (PEVEAAE), 1404-1410 (PEVEAAE), 1411-1417 (PEVEAAE), 1418-1422 (PNGEA), 1425-1429 (PDGEA), 1432-1436 (PIGEA), and 1439-1443 (PNGEA). Residues 1397-1417 (PEVEAAEPEVEAAEPEVEAAE) form a 3 X 7 AA repeat of P-E-V-E-A-A-E region. Residues 1418–1443 (PNGEAEGPDGEAAEPIGEAGQPNGEA) are 4 X 5 AA repeat of P-X-G-E-A. Composition is skewed to acidic residues over residues 1449–1466 (DADEPDGAGIEDPEERAE) and 1475–1495 (PEGDADEPDGVGIEDPEEGED). C2H2-type zinc fingers lie at residues 1505–1527 (YDCHECTETFTSSTAFSEHLKTH) and 1564–1586 (FKCDVCGQLFNDRLSLARHQNTH).

This sequence belongs to the krueppel C2H2-type zinc-finger protein family. In terms of assembly, homodimer. Interacts with SIAH1A and SIAH2. Interacts with TRAF2. Brain, glial cells, astrocytes, embryo, placenta, testis, ovary and uterus. In the placenta it is found in the layer of villous cytotrophoblast cells while in the ovary it is found in the cells of the ovarian stroma including the thecal layers around the follicles. Expression is highly repressed in glioma cell lines.

It is found in the nucleus. The protein resides in the cytoplasm. In terms of biological role, induces apoptosis in cooperation with SIAH1A. Acts as a mediator between p53/TP53 and BAX in a neuronal death pathway that is activated by DNA damage. Acts synergistically with TRAF2 and inhibits TNF induced apoptosis through activation of NF-kappa-B. Possesses a tumor suppressing activity in glioma cells. In Homo sapiens (Human), this protein is Paternally-expressed gene 3 protein (PEG3).